The primary structure comprises 605 residues: Aspartate--tRNA(Asp/Asn) ligase (605 aa).

L-aspartate is bound at residue E172. The aspartate stretch occupies residues 196–199 (QLFK). R218 lines the L-aspartate pocket. ATP contacts are provided by residues 218–220 (RDE) and Q227. L-aspartate is bound at residue H455. E489 is a binding site for ATP. R496 contributes to the L-aspartate binding site. 541-544 (GLDR) is an ATP binding site.

This sequence belongs to the class-II aminoacyl-tRNA synthetase family. Type 1 subfamily. In terms of assembly, homodimer.

Its subcellular location is the cytoplasm. It catalyses the reaction tRNA(Asx) + L-aspartate + ATP = L-aspartyl-tRNA(Asx) + AMP + diphosphate. Aspartyl-tRNA synthetase with relaxed tRNA specificity since it is able to aspartylate not only its cognate tRNA(Asp) but also tRNA(Asn). Reaction proceeds in two steps: L-aspartate is first activated by ATP to form Asp-AMP and then transferred to the acceptor end of tRNA(Asp/Asn). The chain is Aspartate--tRNA(Asp/Asn) ligase from Ralstonia nicotianae (strain ATCC BAA-1114 / GMI1000) (Ralstonia solanacearum).